The chain runs to 308 residues: Ribonuclease HIII (308 aa).

Residues 91-308 enclose the RNase H type-2 domain; that stretch reads KNVIGSDEVG…TEKALKMVKK (218 aa). The a divalent metal cation site is built by Asp-97, Glu-98, and Asp-202.

Belongs to the RNase HII family. RnhC subfamily. The cofactor is Mn(2+). Requires Mg(2+) as cofactor.

It localises to the cytoplasm. It carries out the reaction Endonucleolytic cleavage to 5'-phosphomonoester.. Functionally, endonuclease that specifically degrades the RNA of RNA-DNA hybrids. The protein is Ribonuclease HIII of Listeria monocytogenes serovar 1/2a (strain ATCC BAA-679 / EGD-e).